The sequence spans 148 residues: D-aminoacyl-tRNA deacylase (148 aa).

The short motif at 137–138 (GP) is the Gly-cisPro motif, important for rejection of L-amino acids element.

This sequence belongs to the DTD family. As to quaternary structure, homodimer.

The protein localises to the cytoplasm. It catalyses the reaction glycyl-tRNA(Ala) + H2O = tRNA(Ala) + glycine + H(+). The catalysed reaction is a D-aminoacyl-tRNA + H2O = a tRNA + a D-alpha-amino acid + H(+). Functionally, an aminoacyl-tRNA editing enzyme that deacylates mischarged D-aminoacyl-tRNAs. Also deacylates mischarged glycyl-tRNA(Ala), protecting cells against glycine mischarging by AlaRS. Acts via tRNA-based rather than protein-based catalysis; rejects L-amino acids rather than detecting D-amino acids in the active site. By recycling D-aminoacyl-tRNA to D-amino acids and free tRNA molecules, this enzyme counteracts the toxicity associated with the formation of D-aminoacyl-tRNA entities in vivo and helps enforce protein L-homochirality. The protein is D-aminoacyl-tRNA deacylase of Deinococcus geothermalis (strain DSM 11300 / CIP 105573 / AG-3a).